A 396-amino-acid polypeptide reads, in one-letter code: Elongation factor Tu (396 aa).

Positions 10-205 (KPHVNIGTIG…AVDESIPDPV (196 aa)) constitute a tr-type G domain. Residues 19-26 (GHVDHGKT) are G1. 19-26 (GHVDHGKT) contributes to the GTP binding site. Residue T26 participates in Mg(2+) binding. Residues 62-66 (GITIN) form a G2 region. The interval 83–86 (DAPG) is G3. GTP-binding positions include 83–87 (DAPGH) and 138–141 (NKAD). Residues 138-141 (NKAD) are G4. Residues 175 to 177 (SAL) are G5.

The protein belongs to the TRAFAC class translation factor GTPase superfamily. Classic translation factor GTPase family. EF-Tu/EF-1A subfamily. Monomer.

The protein localises to the cytoplasm. It carries out the reaction GTP + H2O = GDP + phosphate + H(+). GTP hydrolase that promotes the GTP-dependent binding of aminoacyl-tRNA to the A-site of ribosomes during protein biosynthesis. This is Elongation factor Tu from Mycolicibacterium vanbaalenii (strain DSM 7251 / JCM 13017 / BCRC 16820 / KCTC 9966 / NRRL B-24157 / PYR-1) (Mycobacterium vanbaalenii).